A 296-amino-acid chain; its full sequence is NAD kinase (296 aa).

The active-site Proton acceptor is Asp-72. NAD(+) is bound by residues 72-73 (DG), 146-147 (ND), Arg-157, Lys-174, Asp-176, 187-192 (TAYALS), and Gln-247.

Belongs to the NAD kinase family. Requires a divalent metal cation as cofactor.

It localises to the cytoplasm. It catalyses the reaction NAD(+) + ATP = ADP + NADP(+) + H(+). Involved in the regulation of the intracellular balance of NAD and NADP, and is a key enzyme in the biosynthesis of NADP. Catalyzes specifically the phosphorylation on 2'-hydroxyl of the adenosine moiety of NAD to yield NADP. The chain is NAD kinase from Pseudomonas fluorescens (strain Pf0-1).